A 200-amino-acid chain; its full sequence is Recombination protein RecR (200 aa).

The C4-type zinc-finger motif lies at 57–72; it reads CRLCRTLTEEELCPQC. The Toprim domain occupies 80–175; the sequence is TLLCVVEGPT…VASRIAHGVP (96 aa).

It belongs to the RecR family.

In terms of biological role, may play a role in DNA repair. It seems to be involved in an RecBC-independent recombinational process of DNA repair. It may act with RecF and RecO. The sequence is that of Recombination protein RecR from Pseudomonas syringae pv. tomato (strain ATCC BAA-871 / DC3000).